The following is a 159-amino-acid chain: Acetolactate synthase small subunit (159 aa).

Residues I5–D79 form the ACT domain.

This sequence belongs to the acetolactate synthase small subunit family. As to quaternary structure, dimer of large and small chains.

It carries out the reaction 2 pyruvate + H(+) = (2S)-2-acetolactate + CO2. Its pathway is amino-acid biosynthesis; L-isoleucine biosynthesis; L-isoleucine from 2-oxobutanoate: step 1/4. It functions in the pathway amino-acid biosynthesis; L-valine biosynthesis; L-valine from pyruvate: step 1/4. The chain is Acetolactate synthase small subunit (ilvH) from Buchnera aphidicola subsp. Baizongia pistaciae (strain Bp).